The chain runs to 659 residues: Exoribonuclease 2 (659 aa).

The RNB domain occupies 189–531; sequence RENLTALHFV…NHRLIKAVLA (343 aa). One can recognise an S1 motif domain in the interval 576–658; the sequence is NVEFNAEVQD…ATRSIVGEIL (83 aa).

It belongs to the RNR ribonuclease family. RNase II subfamily.

Its subcellular location is the cytoplasm. It carries out the reaction Exonucleolytic cleavage in the 3'- to 5'-direction to yield nucleoside 5'-phosphates.. Its function is as follows. Involved in mRNA degradation. Hydrolyzes single-stranded polyribonucleotides processively in the 3' to 5' direction. This is Exoribonuclease 2 from Haemophilus influenzae (strain 86-028NP).